A 51-amino-acid chain; its full sequence is Cytoplasmic FMR1-interacting protein 1 (51 aa).

Belongs to the CYFIP family. Component of the WAVE1 complex composed of ABI2, CYFIP1 or CYFIP2, BRK1, NCKAP1 and WASF1/WAVE1. Within the complex, a heterodimer containing NCKAP1 and CYFIP1 interacts with a heterotrimer formed by WAVE1, ABI2 and BRK1. Component of the CYFIP1-EIF4E-FMR1 complex which is composed of CYFIP, EIF4E and FMR1. Interacts with FMR1 but does not bind to related proteins FXR1 or FXR2. Interaction with EIF4E stimulates FMR1 binding. Component of the WAVE2 complex composed of ABI1, CYFIP1/SRA1, NCKAP1/NAP1 (NCKAP1l/HEM1 in hematopoietic cells) and WASF2/WAVE2. Interacts with the active GTP-bound form of RAC1. Interacts through its C-terminus with the C-terminus of DPYSL2/CRMP2 which is necessary for DPYSL2-induced axon outgrowth. Interacts with NYAP1, NYAP2 and MYO16. Interacts with TMEM108 (via N-terminus); the interaction associates TMEM108 with the WAVE1 complex.

The protein localises to the cytoplasm. Its subcellular location is the perinuclear region. The protein resides in the cell projection. It is found in the lamellipodium. It localises to the ruffle. The protein localises to the synapse. Its subcellular location is the synaptosome. Component of the CYFIP1-EIF4E-FMR1 complex which binds to the mRNA cap and mediates translational repression. In the CYFIP1-EIF4E-FMR1 complex this subunit is an adapter between EIF4E and FMR1. Promotes the translation repression activity of FMR1 in brain probably by mediating its association with EIF4E and mRNA. Regulates formation of membrane ruffles and lamellipodia. Plays a role in axon outgrowth. Binds to F-actin but not to RNA. Part of the WAVE complex that regulates actin filament reorganization via its interaction with the Arp2/3 complex. Actin remodeling activity is regulated by RAC1. Regulator of epithelial morphogenesis. As component of the WAVE1 complex, required for BDNF-NTRK2 endocytic trafficking and signaling from early endosomes. In Bos taurus (Bovine), this protein is Cytoplasmic FMR1-interacting protein 1.